We begin with the raw amino-acid sequence, 2129 residues long: Transcription initiation factor TFIID subunit 1 (2129 aa).

Positions 1-423 (MEMESDNSDD…VSQLHWEDDV (423 aa)) constitute a Protein kinase 1 domain. Disordered stretches follow at residues 77–233 (AEPP…DVRE), 246–348 (FSRL…PKVA), 377–405 (TKAASTSSQPQLKDERRVKSPEDDVEDPS), and 445–497 (AGWL…AEAP). Residues 79–88 (PPSDDEEEED) are compositionally biased toward acidic residues. Basic and acidic residues-rich tracts occupy residues 110–121 (VKREDGAVKAQD), 159–170 (VEAKLTKDDKEL), and 200–215 (DDSKSTDSKDADRKLD). Positions 263 to 273 (RHVRKRRRKRN) are enriched in basic residues. Residues 280-289 (TTNTGGSDSP) are compositionally biased toward polar residues. Serine 286, serine 288, and serine 290 each carry phosphoserine. Serine 315 is subject to Phosphoserine; by autocatalysis. Basic and acidic residues predominate over residues 388–398 (LKDERRVKSPE). A compositionally biased stretch (low complexity) spans 470–494 (GSGSSKQGSGASSKKAQQNAQAKPA). Phosphoserine is present on serine 603. Disordered stretches follow at residues 1016–1038 (KPTQTKEEQESQPKRSVTGTDAD), 1149–1208 (LENM…LATN), 1296–1336 (AQNQ…PSRK), 1368–1391 (GMQSSLSQSNPSLADDFDEQSEKE), and 1415–1435 (KRHGGDDGKRRSGSSSGFTLK). Positions 1019-1028 (QTKEEQESQP) are enriched in basic and acidic residues. Over residues 1151–1160 (NMLSNKKTST) the composition is skewed to polar residues. Positions 1163–1183 (SREREELERQELLRQLDEEHG) are enriched in basic and acidic residues. The segment covering 1184–1193 (GPSGSGGAKG) has biased composition (gly residues). The span at 1368-1379 (GMQSSLSQSNPS) shows a compositional bias: polar residues. Residues 1442–1448 (GKKKRRV) carry the Nuclear localization signal motif. Bromo domains follow at residues 1466-1574 (RRRT…LAER) and 1588-1696 (LLDD…LIEF). Residues 1515–2065 (MDLQTMREYI…QHQQMGQAAS (551 aa)) enclose the Protein kinase 2 domain. 4 disordered regions span residues 1710-1872 (TQER…LDQG), 1973-1992 (LSHEQDDNGPYNPAEASTSA), 2018-2042 (NNGMGIDDDLDISESDEEDDGSRVR), and 2101-2129 (QHQVMPPMQSEQLQQQQTPQGDNDYAWTF). Serine 1740 carries the post-translational modification Phosphoserine. A compositionally biased stretch (acidic residues) spans 1836 to 1863 (LDEDLQCSTDDEDDDEEEDFQEVSEDEN). A compositionally biased stretch (acidic residues) spans 2023-2037 (IDDDLDISESDEEDD). Residues 2101–2120 (QHQVMPPMQSEQLQQQQTPQ) are compositionally biased toward low complexity.

This sequence belongs to the TAF1 family. Belongs to the TFIID complex which is composed of TATA binding protein (Tbp) and a number of TBP-associated factors (Tafs). Taf1 is the largest component of the TFIID complex. Interacts with Tbp, Taf2, Taf4 and Taf6. Mg(2+) serves as cofactor.

The protein localises to the nucleus. It catalyses the reaction L-seryl-[protein] + ATP = O-phospho-L-seryl-[protein] + ADP + H(+). The enzyme catalyses L-threonyl-[protein] + ATP = O-phospho-L-threonyl-[protein] + ADP + H(+). With respect to regulation, autophosphorylates on Ser residues. Its function is as follows. TFIID is a multimeric protein complex that plays a central role in mediating promoter responses to various activators and repressors. Largest component and core scaffold of the complex. Contains N- and C-terminal Ser/Thr kinase domains which can autophosphorylate or transphosphorylate other transcription factors. Possesses DNA-binding activity. Essential for progression of the G1 phase of the cell cycle. Negative regulator of the TATA box-binding activity of Tbp. The protein is Transcription initiation factor TFIID subunit 1 (Taf1) of Drosophila melanogaster (Fruit fly).